The chain runs to 90 residues: MMEAHFKYHGNLTGRAHFPTLATEVDTSSDKYSNLYMYVGLFLSLLAILLILLFTMLLRLKHVISPINSDSTESVPQFTDVEMQSRIPTP.

Residue asparagine 11 is glycosylated (N-linked (GlcNAc...) asparagine). The chain crosses the membrane as a helical span at residues tyrosine 38 to leucine 58. Residues serine 69–proline 90 form a disordered region.

It is found in the membrane. The sequence is that of Serine-rich and transmembrane domain-containing 2 from Homo sapiens (Human).